The chain runs to 196 residues: Thymidine kinase (196 aa).

Residues 9–16 (GTMNSGKS) and 85–88 (DEAQ) each bind ATP. The active-site Proton acceptor is glutamate 86. Zn(2+)-binding residues include cysteine 143, cysteine 146, cysteine 180, and histidine 183.

Belongs to the thymidine kinase family. In terms of assembly, homotetramer.

It localises to the cytoplasm. The enzyme catalyses thymidine + ATP = dTMP + ADP + H(+). The polypeptide is Thymidine kinase (Streptococcus thermophilus (strain CNRZ 1066)).